The primary structure comprises 416 residues: Carboxypeptidase B (416 aa).

An N-terminal signal peptide occupies residues 1–15 (MAFLILVTLALASAH). Residues 16–109 (YSGEHFEGEK…LEGQFGRQVP (94 aa)) constitute a propeptide, activation peptide. The region spanning 117–411 (KYNRWETIEA…LAIKHLARYV (295 aa)) is the Peptidase M14 domain. The Zn(2+) site is built by His175 and Glu178. Substrate-binding positions include 175-178 (HARE), Arg233, and 250-251 (TR). Disulfide bonds link Cys244–Cys267 and Cys258–Cys272. Position 303 (His303) interacts with Zn(2+). Substrate contacts are provided by residues 304 to 305 (SY) and Tyr355. The Proton donor/acceptor role is filled by Glu377.

It belongs to the peptidase M14 family. Zn(2+) is required as a cofactor.

The protein resides in the secreted. It localises to the zymogen granule lumen. The catalysed reaction is Preferential release of a C-terminal lysine or arginine amino acid.. The protein is Carboxypeptidase B (CPB1) of Canis lupus familiaris (Dog).